A 337-amino-acid chain; its full sequence is Mating-type protein MAT-2 (337 aa).

Positions 125-193 form a DNA-binding region, HMG box; the sequence is APRPMNCWII…EHLRQHPNYK (69 aa). A disordered region spans residues 171–219; sequence KRPWQDAAQSAKEEHLRQHPNYKYTPRKPGEKKKRQSRKSKRAAATTTA. Basic residues predominate over residues 200 to 212; sequence GEKKKRQSRKSKR.

The protein localises to the nucleus. The chain is Mating-type protein MAT-2 (MAT2) from Cochliobolus sativus (Common root rot and spot blotch fungus).